Reading from the N-terminus, the 141-residue chain is MAKKVIGEIKLQIAATKANPSPPVGPALGQKGVNIMEFCKAFNEKTKDMVGFNIPVVITVYADKSFTFITKQPPATDLIKKAAGITKGTDNPLKNKVGKLTKAQVLEIVEKKLVDLNTNDKEQAAKIIAGSARSMGVEVVD.

It belongs to the universal ribosomal protein uL11 family. Part of the ribosomal stalk of the 50S ribosomal subunit. Interacts with L10 and the large rRNA to form the base of the stalk. L10 forms an elongated spine to which L12 dimers bind in a sequential fashion forming a multimeric L10(L12)X complex. In terms of processing, one or more lysine residues are methylated.

Functionally, forms part of the ribosomal stalk which helps the ribosome interact with GTP-bound translation factors. The protein is Large ribosomal subunit protein uL11 of Campylobacter concisus (strain 13826).